Here is a 521-residue protein sequence, read N- to C-terminus: U4/U6 small nuclear ribonucleoprotein Prp4 (521 aa).

Lys-26 bears the N6-acetyllysine mark. WD repeat units follow at residues 228–267 (GDDR…LLHT), 270–317 (GHNT…PVAD), 320–359 (GHTV…EILH), 362–401 (GHSM…CIMF), 404–443 (GHLK…CVYT), 446–486 (AHQN…PLKT), and 489–521 (GHEG…WMAE).

In terms of assembly, component of the precatalytic spliceosome (spliceosome B complex). Component of the U4/U6-U5 tri-snRNP complex, a building block of the precatalytic spliceosome (spliceosome B complex). The U4/U6-U5 tri-snRNP complex is composed of the U4, U6 and U5 snRNAs and at least PRPF3, PRPF4, PRPF6, PRPF8, PRPF31, SNRNP200, TXNL4A, SNRNP40, SNRPB, SNRPD1, SNRPD2, SNRPD3, SNRPE, SNRPF, SNRPG, DDX23, CD2BP2, PPIH, SNU13, EFTUD2, SART1 and USP39, plus LSM2, LSM3, LSM4, LSM5, LSM6, LSM7 and LSM8. Interacts directly with PRPF18, PPIH and PRPF3. Part of a heteromeric complex containing PPIH, PRPF3 and PRPF4 that is stable in the absence of RNA. Interacts with ERCC6.

It localises to the nucleus. The protein localises to the nucleus speckle. Its function is as follows. Plays a role in pre-mRNA splicing as component of the U4/U6-U5 tri-snRNP complex that is involved in spliceosome assembly, and as component of the precatalytic spliceosome (spliceosome B complex). In Mus musculus (Mouse), this protein is U4/U6 small nuclear ribonucleoprotein Prp4 (Prpf4).